A 443-amino-acid chain; its full sequence is Nuclear pore complex-interacting protein family member B15 (443 aa).

An N-terminal signal peptide occupies residues Met-1–His-18. Asn-111 carries N-linked (GlcNAc...) asparagine glycosylation. 2 disordered regions span residues Arg-242–Ser-262 and Ser-330–Cys-413. Residues Gln-252–Ser-262 are compositionally biased toward polar residues. Over residues Glu-351 to Glu-393 the composition is skewed to basic and acidic residues. Basic residues predominate over residues Lys-399–His-412.

Belongs to the NPIP family.

The protein resides in the secreted. The chain is Nuclear pore complex-interacting protein family member B15 (NPIPB15) from Homo sapiens (Human).